We begin with the raw amino-acid sequence, 320 residues long: Ferrochelatase (320 aa).

Fe cation is bound by residues H194 and E275.

The protein belongs to the ferrochelatase family.

It localises to the cytoplasm. The enzyme catalyses heme b + 2 H(+) = protoporphyrin IX + Fe(2+). Its pathway is porphyrin-containing compound metabolism; protoheme biosynthesis; protoheme from protoporphyrin-IX: step 1/1. Functionally, catalyzes the ferrous insertion into protoporphyrin IX. The chain is Ferrochelatase from Xylella fastidiosa (strain M12).